Consider the following 2285-residue polypeptide: AT-rich interactive domain-containing protein 1A (2285 aa).

The span at 1-14 (MAAQVAPAAASSLG) shows a compositional bias: low complexity. Disordered regions lie at residues 1 to 820 (MAAQ…ALPN) and 978 to 1005 (ATKMNNKADGTPKTESKSKKSSSSTTTN). At alanine 2 the chain carries N-acetylalanine. A compositionally biased stretch (basic and acidic residues) spans 23 to 35 (ELKKAEQQQREEA). Phosphoserine occurs at positions 58 and 79. Gly residues-rich tracts occupy residues 79–95 (SNGGGGGGGAGSGGGPG) and 121–130 (PGGGGGGSSD). Low complexity-rich tracts occupy residues 131–142 (GVGAPPHSAAAA), 212–221 (YNSYYPNRSA), and 228–265 (AYALSSPRGGTPGSGAAAAAGSKPPPSSSASASSSSSS). Serine 233 bears the Phosphoserine mark. Over residues 273-286 (AMGGGGPSAAGGGT) the composition is skewed to gly residues. Threonine 286 is subject to Phosphothreonine. The LXXLL signature appears at 295–299 (LNQLL). The segment covering 295-306 (LNQLLTSPSSAR) has biased composition (polar residues). Position 301 is a phosphoserine (serine 301). Residues 310–327 (GYPGGDYSGGPQDGGAGK) show a composition bias toward gly residues. Residues 338–353 (GAAAAAAAAAAASGGA) show a composition bias toward low complexity. Serine 363 and serine 382 each carry phosphoserine. A compositionally biased stretch (low complexity) spans 400-425 (PYSQQQGPPSGPQQGHGYPGQPYGSQ). The residue at position 429 (arginine 429) is an Asymmetric dimethylarginine. Composition is skewed to low complexity over residues 447 to 457 (YTQQIPPYGQQ), 465 to 546 (QGQT…QHPQ), and 553 to 595 (QPQA…YSQQ). Serine 604 carries the phosphoserine modification. Residues 610 to 621 (SQASSAPSMTSS) show a composition bias toward low complexity. The segment covering 628-637 (MNLSLQSRPS) has biased composition (polar residues). Positions 658 to 674 (SPGVSTSGISSSQGEQS) are enriched in low complexity. The span at 675–685 (NPAQSPFSPHT) shows a compositional bias: polar residues. Serine 696, serine 698, serine 702, serine 730, serine 764, and serine 772 each carry phosphoserine. 2 stretches are compositionally biased toward polar residues: residues 730–747 (SGQSDSIMHPSMNQSSIA) and 755–793 (RNPQMPQYSSPQPGSALSPRQPSGGQIHTGMGSYQQNSM). Positions 797–807 (GPQGGQYGPQG) are enriched in gly residues. Residues 808–820 (GYPRQPNYNALPN) show a composition bias toward low complexity. The region spanning 1017–1108 (EPERKMWVDR…CLYAFECKIE (92 aa)) is the ARID domain. Disordered regions lie at residues 1113–1483 (PPPD…MMGG) and 1539–1603 (ANHE…SPSK). Positions 1141 to 1154 (MQGPQTPQSTSSSM) are enriched in low complexity. A compositionally biased stretch (pro residues) spans 1162 to 1177 (PPTPASTPHSQIPPLP). Residue serine 1184 is modified to Phosphoserine. Over residues 1194–1219 (GSDSTFQKRNSMTPNPGYQPSMNTSD) the composition is skewed to polar residues. Residue serine 1235 is modified to Phosphoserine. An Omega-N-methylarginine modification is found at arginine 1276. Polar residues-rich tracts occupy residues 1299 to 1315 (NMSTGAPQPNLMPSNPD) and 1339 to 1356 (YGNQFSTQGTPSGSPFPS). Residues 1357–1367 (QQTTMYQQQQQ) show a composition bias toward low complexity. The short motif at 1368–1387 (NYKRPMDGTYGPPAKRHEGE) is the Nuclear localization signal element. Residues 1396 to 1425 (GQGQPQQQQLPPAQPQPASQQQAAQPSPQQ) show a composition bias toward low complexity. A compositionally biased stretch (polar residues) spans 1468-1477 (PGTNAQQNMP). Positions 1554–1577 (PYGPSAPVPPMTRPPPSNYQPPPS) are enriched in pro residues. Residue serine 1604 is modified to Phosphoserine. Lysine 1612 is subject to N6-acetyllysine. The LXXLL signature appears at 1709-1713 (LPGLL). Disordered regions lie at residues 1747–1774 (PGRFSKVSSPAPMEGGEEEEELLGPKLE) and 1859–1907 (FESK…EKRI). A phosphoserine mark is found at serine 1751 and serine 1754. The span at 1761-1774 (GGEEEEELLGPKLE) shows a compositional bias: acidic residues. Positions 1886–1895 (EGTPGTTDQE) are enriched in low complexity. At threonine 1888 the chain carries Phosphothreonine. N6-acetyllysine is present on lysine 1905. 2 positions are modified to phosphoserine: serine 1929 and serine 1944. 2 short sequence motifs (LXXLL) span residues 1967–1971 (LCTLL) and 2085–2089 (LDGLL).

In terms of assembly, component of SWI/SNF chromatin remodeling complexes, in some of which it can be mutually exclusive with ARID1B/BAF250B. The canonical complex contains a catalytic subunit (either SMARCA4/BRG1/BAF190A or SMARCA2/BRM/BAF190B) and at least SMARCE1, ACTL6A/BAF53, SMARCC1/BAF155, SMARCC2/BAF170, and SMARCB1/SNF5/BAF47. Other subunits specific to each of the complexes may also be present permitting several possible combinations developmentally and tissue specific. Component of the BAF (SWI/SNF-A) complex, which includes at least actin (ACTB), ARID1A/BAF250A, ARID1B/BAF250B, SMARCA2/BRM, SMARCA4/BRG1/BAF190A, ACTL6A/BAF53, ACTL6B/BAF53B, SMARCE1/BAF57, SMARCC1/BAF155, SMARCC2/BAF170, SMARCB1/SNF5/INI1, and one or more SMARCD1/BAF60A, SMARCD2/BAF60B, or SMARCD3/BAF60C. In muscle cells, the BAF complex also contains DPF3. Component of neural progenitors-specific chromatin remodeling complex (npBAF complex) composed of at least, ARID1A/BAF250A or ARID1B/BAF250B, SMARCD1/BAF60A, SMARCD3/BAF60C, SMARCA2/BRM/BAF190B, SMARCA4/BRG1/BAF190A, SMARCB1/BAF47, SMARCC1/BAF155, SMARCE1/BAF57, SMARCC2/BAF170, PHF10/BAF45A, ACTL6A/BAF53A and actin. Component of neuron-specific chromatin remodeling complex (nBAF complex) composed of at least, ARID1A/BAF250A or ARID1B/BAF250B, SMARCD1/BAF60A, SMARCD3/BAF60C, SMARCA2/BRM/BAF190B, SMARCA4/BRG1/BAF190A, SMARCB1/BAF47, SMARCC1/BAF155, SMARCE1/BAF57, SMARCC2/BAF170, DPF1/BAF45B, DPF3/BAF45C, ACTL6B/BAF53B and actin. Component of a SWI/SNF-like EBAFa complex, at least composed of SMARCA4/BRG1/BAF190A, SMARCB1/BAF47/SNF5, ACTL6A/BAF53A, SMARCE1/BAF57, SMARCD1/BAF60A, SMARCC1/BAF155, SMARCC2/BAF170, BAF250A and MLLT1/ENL. Interacts through its C-terminus with SMARCA2/BRM/BAF190B and SMARCA4/BRG1/BAF190A. Interacts with SMARCC1/BAF155. Interacts with FOS, FOSB isoform 1 and 2, FOSL1 and FOSL2. In terms of tissue distribution, highly expressed in spleen, thymus, prostate, testis, ovary, small intestine, colon, and PBL, and at a much lower level in heart, brain, placenta, lung, liver, skeletal muscle, kidney, and pancreas.

The protein localises to the nucleus. In terms of biological role, involved in transcriptional activation and repression of select genes by chromatin remodeling (alteration of DNA-nucleosome topology). Component of SWI/SNF chromatin remodeling complexes that carry out key enzymatic activities, changing chromatin structure by altering DNA-histone contacts within a nucleosome in an ATP-dependent manner. Binds DNA non-specifically. Belongs to the neural progenitors-specific chromatin remodeling complex (npBAF complex) and the neuron-specific chromatin remodeling complex (nBAF complex). During neural development a switch from a stem/progenitor to a postmitotic chromatin remodeling mechanism occurs as neurons exit the cell cycle and become committed to their adult state. The transition from proliferating neural stem/progenitor cells to postmitotic neurons requires a switch in subunit composition of the npBAF and nBAF complexes. As neural progenitors exit mitosis and differentiate into neurons, npBAF complexes which contain ACTL6A/BAF53A and PHF10/BAF45A, are exchanged for homologous alternative ACTL6B/BAF53B and DPF1/BAF45B or DPF3/BAF45C subunits in neuron-specific complexes (nBAF). The npBAF complex is essential for the self-renewal/proliferative capacity of the multipotent neural stem cells. The nBAF complex along with CREST plays a role regulating the activity of genes essential for dendrite growth. This Homo sapiens (Human) protein is AT-rich interactive domain-containing protein 1A (ARID1A).